Here is a 253-residue protein sequence, read N- to C-terminus: MADSGSDAPISNRPEEEVTVEKTPEMEAAAEEERLRYLEFVQQAAAQVLVLAAAAYAYAKQGAGPLRPGVDHVEGTVKAVVGPVYDRFHGVPLDLLKFLDRKVGESVQELDRRVPPVVKEAPGLARSAAAEVRQAGLVGTATGLAKSAIARAEPRARDLYTRYEPVAERKAAEAWAALNRLPLVPSVTRAVLPAAASLSARYNTAVADGAKRGSAVATYLPLVPTERLSRVFGYPLADAATSPAPEMQPIPSQ.

The disordered stretch occupies residues 1–26; it reads MADSGSDAPISNRPEEEVTVEKTPEM. Residues 13 to 26 are compositionally biased toward basic and acidic residues; the sequence is RPEEEVTVEKTPEM.

Belongs to the REF/SRPP family.

This chain is REF/SRPP-like protein Os05g0151300/LOC_Os05g05940, found in Oryza sativa subsp. japonica (Rice).